Consider the following 284-residue polypeptide: Succinate dehydrogenase [ubiquinone] iron-sulfur subunit, mitochondrial (284 aa).

The transit peptide at 1–26 (MAAVVFSLRRSGPVFRLPGVLQVCRG) directs the protein to the mitochondrion. Positions 44-137 (KKFAIYRWDP…VSKIYPLPHM (94 aa)) constitute a 2Fe-2S ferredoxin-type domain. [2Fe-2S] cluster contacts are provided by C97, C102, C105, and C117. The 4Fe-4S ferredoxin-type domain occupies 180-210 (DRDKLDGLYECILCACCSTSCPSYWWNADKY). Positions 190, 193, and 196 each coordinate [4Fe-4S] cluster. C200 contacts [3Fe-4S] cluster. A ubiquinone is bound at residue W205. C247 and C253 together coordinate [3Fe-4S] cluster. C257 contacts [4Fe-4S] cluster.

It belongs to the succinate dehydrogenase/fumarate reductase iron-sulfur protein family. As to quaternary structure, component of complex II composed of four subunits: the flavoprotein (FP) sdha, iron-sulfur protein (IP) sdhb, and a cytochrome b composed of sdhc and sdhd. [2Fe-2S] cluster is required as a cofactor. [3Fe-4S] cluster serves as cofactor. It depends on [4Fe-4S] cluster as a cofactor.

The protein localises to the mitochondrion inner membrane. It carries out the reaction a quinone + succinate = fumarate + a quinol. It catalyses the reaction (R)-malate + a quinone = enol-oxaloacetate + a quinol. The catalysed reaction is (S)-malate + a quinone = enol-oxaloacetate + a quinol. The protein operates within carbohydrate metabolism; tricarboxylic acid cycle; fumarate from succinate (eukaryal route): step 1/1. Enol-oxaloacetate inhibits the succinate dehydrogenase activity. Its function is as follows. Iron-sulfur protein (IP) subunit of the succinate dehydrogenase complex (mitochondrial respiratory chain complex II), responsible for transferring electrons from succinate to ubiquinone (coenzyme Q). SDH also oxidizes malate to the non-canonical enol form of oxaloacetate, enol-oxaloacetate. Enol-oxaloacetate, which is a potent inhibitor of the succinate dehydrogenase activity, is further isomerized into keto-oxaloacetate. The protein is Succinate dehydrogenase [ubiquinone] iron-sulfur subunit, mitochondrial (sdhb) of Xenopus tropicalis (Western clawed frog).